We begin with the raw amino-acid sequence, 201 residues long: Holliday junction branch migration complex subunit RuvA (201 aa).

A domain I region spans residues 1-63 (MIGCLIGEVF…EDAQQLYGFI (63 aa)). Residues 64–142 (DAQEKLIFRT…ALSVQATTGS (79 aa)) are domain II. The interval 143–152 (TVTSAQIQFS) is flexible linker. The tract at residues 152 to 201 (SSNSPIAEAEAALQSLGYKPIEAQKAIAAVKADYTEAADLIRAALKSMMK) is domain III.

Belongs to the RuvA family. As to quaternary structure, homotetramer. Forms an RuvA(8)-RuvB(12)-Holliday junction (HJ) complex. HJ DNA is sandwiched between 2 RuvA tetramers; dsDNA enters through RuvA and exits via RuvB. An RuvB hexamer assembles on each DNA strand where it exits the tetramer. Each RuvB hexamer is contacted by two RuvA subunits (via domain III) on 2 adjacent RuvB subunits; this complex drives branch migration. In the full resolvosome a probable DNA-RuvA(4)-RuvB(12)-RuvC(2) complex forms which resolves the HJ.

Its subcellular location is the cytoplasm. The RuvA-RuvB-RuvC complex processes Holliday junction (HJ) DNA during genetic recombination and DNA repair, while the RuvA-RuvB complex plays an important role in the rescue of blocked DNA replication forks via replication fork reversal (RFR). RuvA specifically binds to HJ cruciform DNA, conferring on it an open structure. The RuvB hexamer acts as an ATP-dependent pump, pulling dsDNA into and through the RuvAB complex. HJ branch migration allows RuvC to scan DNA until it finds its consensus sequence, where it cleaves and resolves the cruciform DNA. The chain is Holliday junction branch migration complex subunit RuvA from Acinetobacter baylyi (strain ATCC 33305 / BD413 / ADP1).